The chain runs to 223 residues: uncharacterized protein (223 aa).

Transmembrane regions (helical) follow at residues 22 to 42 (LTVGLFVITFFNPGANLFVVV), 59 to 79 (GVALGDAFYSGLGLFGLATLI), 85 to 105 (IFSLIRIVGGAYLLWFAWCSM), and 164 to 184 (MAWAGIVLASIIWRVFLSQAF).

Belongs to the Rht family.

The protein resides in the cell membrane. This is an uncharacterized protein from Escherichia coli (strain K12).